A 322-amino-acid chain; its full sequence is MTDAAGGRQEIWVEKYRPERLEDVVGHPDITERLQSYVDRDDLPHLLFAGPAGTGKTASSVSIAKELYGDDWQDNFLELNASDERGIDVVRDRIKDFARSSFGGHNYRVIFLDEADALTDDAQSALRRTMEQFSNNTRFILSCNYSSKIIDPIQSRCAVFRFAQLGDDAVAAHLREIAETEGLEHTDDGIDALVYAADGDMRRAINALQAASATGDSVNEETVYAITATARPEEIETMVTEALGGDFAAARATLDDLLTNRGLAGGDIIDQVHRSVWEFDVEEAAAVRLLDRLGEADYRIAEGANERVQLEALLASVALNAE.

ATP is bound at residue 50-57; the sequence is GPAGTGKT.

The protein belongs to the activator 1 small subunits family. RfcS subfamily. As to quaternary structure, heteromultimer composed of small subunits (RfcS) and large subunits (RfcL).

In terms of biological role, part of the RFC clamp loader complex which loads the PCNA sliding clamp onto DNA. The protein is Replication factor C small subunit of Halobacterium salinarum (strain ATCC 700922 / JCM 11081 / NRC-1) (Halobacterium halobium).